The primary structure comprises 192 residues: Nucleoside triphosphate pyrophosphatase (192 aa).

Asp73 serves as the catalytic Proton acceptor.

It belongs to the Maf family. A divalent metal cation serves as cofactor.

The protein localises to the cytoplasm. The enzyme catalyses a ribonucleoside 5'-triphosphate + H2O = a ribonucleoside 5'-phosphate + diphosphate + H(+). It catalyses the reaction a 2'-deoxyribonucleoside 5'-triphosphate + H2O = a 2'-deoxyribonucleoside 5'-phosphate + diphosphate + H(+). Its function is as follows. Nucleoside triphosphate pyrophosphatase. May have a dual role in cell division arrest and in preventing the incorporation of modified nucleotides into cellular nucleic acids. This is Nucleoside triphosphate pyrophosphatase from Ehrlichia ruminantium (strain Welgevonden).